A 407-amino-acid chain; its full sequence is Protein ATC1/LIC4 (407 aa).

It is found in the cytoplasm. The protein resides in the nucleus. In terms of biological role, involved in cation homeostasis and in the regulation of the cation stress signaling cascades. The polypeptide is Protein ATC1/LIC4 (ATC1) (Eremothecium gossypii (strain ATCC 10895 / CBS 109.51 / FGSC 9923 / NRRL Y-1056) (Yeast)).